The following is a 538-amino-acid chain: MTDLNKVINELGALGIHDVKEIVYNPSYEQLFEEETKPGLEGYEKGIVTQSGAVAVDTGIFTGRSPKDKYIVLDDKTKDTVWWTSDAAKNDNKPMTQDTWKSLKGLVTEQLSGKRLFVIDAFCGANADTRLSVRIVTEVAWQAHFVKNMFIRPTEAELVGFKPDFVVMNGSKVTNPNWKEQGLNSENFVAFNLTEGVQLIGGTWYGGEMKKGMFSMMNYFLPLKGIASMHCSANVGEKGDVAVFFGLSGTGKTTLSTDPKRQLIGDDEHGWDDDGVFNYEGGCYAKTIKLSPENEPDIYKAIKRDALLENVVVRADGSVDYDDGSKTENTRVSYPIYHIDNIVTPVSKAGHAKKVIFLTADAFGVLPPVSKLTPEQTKYYFLSGFTAKLAGTERGITEPTPTFSACFGAAFLSLHPTQYAEVLVKRMEAAGAEAYLVNTGWNGTGKRISIKDTRGIIDAILDGSIEKAEMGKLPIFDLAIPTALPGVDPAILDPRDTYADKAQWQAKAEDLAGRFVKNFEKYTTNDEGKALVAAGPKA.

Substrate contacts are provided by arginine 64, tyrosine 205, and lysine 211. Residues lysine 211, histidine 230, and 246 to 254 (GLSGTGKTT) contribute to the ATP site. Mn(2+) is bound by residues lysine 211 and histidine 230. Aspartate 267 is a Mn(2+) binding site. ATP contacts are provided by residues glutamate 295, arginine 331, 447 to 448 (RI), and threonine 453. A substrate-binding site is contributed by arginine 331.

The protein belongs to the phosphoenolpyruvate carboxykinase (ATP) family. As to quaternary structure, monomer. The cofactor is Mn(2+).

Its subcellular location is the cytoplasm. It carries out the reaction oxaloacetate + ATP = phosphoenolpyruvate + ADP + CO2. Its pathway is carbohydrate biosynthesis; gluconeogenesis. Its function is as follows. Involved in the gluconeogenesis. Catalyzes the conversion of oxaloacetate (OAA) to phosphoenolpyruvate (PEP) through direct phosphoryl transfer between the nucleoside triphosphate and OAA. This chain is Phosphoenolpyruvate carboxykinase (ATP), found in Pasteurella multocida (strain Pm70).